The sequence spans 149 residues: Flagellar assembly factor FliW (149 aa).

Belongs to the FliW family. In terms of assembly, interacts with translational regulator CsrA and flagellin(s).

The protein localises to the cytoplasm. In terms of biological role, acts as an anti-CsrA protein, binds CsrA and prevents it from repressing translation of its target genes, one of which is flagellin. Binds to flagellin and participates in the assembly of the flagellum. The sequence is that of Flagellar assembly factor FliW from Thermotoga neapolitana (strain ATCC 49049 / DSM 4359 / NBRC 107923 / NS-E).